The chain runs to 46 residues: Esculentin-1R (46 aa).

Cysteine 40 and cysteine 46 form a disulfide bridge.

Expressed by the skin glands.

It localises to the secreted. Its function is as follows. Shows antibacterial activity against representative Gram-negative and Gram-positive bacterial species, and hemolytic activity. This is Esculentin-1R from Pelophylax ridibundus (Marsh frog).